A 218-amino-acid polypeptide reads, in one-letter code: Small ribosomal subunit protein mS34 (218 aa).

The protein belongs to the mitochondrion-specific ribosomal protein mS34 family. Component of the mitochondrial ribosome small subunit (28S) which comprises a 12S rRNA and about 30 distinct proteins. In terms of tissue distribution, widely expressed (at protein liver).

The protein resides in the mitochondrion. Functionally, required for mitochondrial translation, plays a role in maintaining the stability of the small ribosomal subunit and the 12S rRNA that are required for mitoribosome formation. The sequence is that of Small ribosomal subunit protein mS34 (Mrps34) from Mus musculus (Mouse).